Reading from the N-terminus, the 356-residue chain is uncharacterized protein (356 aa).

The next 6 membrane-spanning stretches (helical) occupy residues 2–22 (FEAI…FHRL), 35–55 (EYVT…PIPF), 76–96 (NMIY…FIFG), 99–119 (IIYG…GPFL), 124–144 (IISL…LALL), and 151–171 (VEIL…AITF). The GGDEF domain maps to 218 to 353 (QSLALLLIDI…GRNKVMFNPI (136 aa)).

Its subcellular location is the cell membrane. This is an uncharacterized protein from Staphylococcus epidermidis (strain ATCC 35984 / DSM 28319 / BCRC 17069 / CCUG 31568 / BM 3577 / RP62A).